The following is a 322-amino-acid chain: uncharacterized protein (322 aa).

Residues 205–286 (QEIKNAHAAL…LKKAISEAVQ (82 aa)) adopt a coiled-coil conformation. 2 stretches are compositionally biased toward basic and acidic residues: residues 254–281 (EKEEELNKKDKEKEEETEKEGEKLKKAI) and 290–299 (DRIEAIEKSR). The segment at 254–322 (EKEEELNKKD…VQKSIWSGLF (69 aa)) is disordered. Over residues 310 to 322 (SEQVQKSIWSGLF) the composition is skewed to polar residues.

It to B.subtilis XkdF.

This is an uncharacterized protein from Bacillus subtilis (strain 168).